The following is a 560-amino-acid chain: Solute carrier family 22 member 6 (560 aa).

At 1 to 15 (MAFSDLLEQVGSTGR) the chain is on the cytoplasmic side. Residues 16 to 36 (FQVLHVTLLSMPILMMASHNL) traverse the membrane as a helical segment. Over 37-143 (LQNFVAAVPP…LVCDYRALKQ (107 aa)) the chain is Extracellular. The helical transmembrane segment at 144-164 (MSQTTYMGGVLVGAIVFGGLS) threads the bilayer. The Cytoplasmic portion of the chain corresponds to 165-170 (DRFGRR). Residues 171-191 (VLLLISNLMMAIGGTCVAFST) form a helical membrane-spanning segment. The Extracellular portion of the chain corresponds to 192–201 (SFTMFCVFRV). Residues 202–222 (CCGMALSGLVLNSFSLIVEWI) form a helical membrane-spanning segment. Residues 223 to 228 (PTRVRT) lie on the Cytoplasmic side of the membrane. The chain crosses the membrane as a helical span at residues 229-249 (VVGTGTGYCYTTGQLILAAVA). The Extracellular segment spans residues 250 to 256 (YCIRDWR). The chain crosses the membrane as a helical span at residues 257-277 (WLTLAVSLPFYVSFLYSWWFL). At 278 to 345 (ESARWLVLTK…DLLRTSTMRT (68 aa)) the chain is on the cytoplasmic side. The chain crosses the membrane as a helical span at residues 346–366 (ITICLSAVWFSTSFAYYGLSM). The Extracellular segment spans residues 367-374 (DLQKFGVS). The chain crosses the membrane as a helical span at residues 375–395 (IYLIQIIFGAVDIPAKIIVTI). At 396–406 (CMSMLGRRPSQ) the chain is on the cytoplasmic side. A helical membrane pass occupies residues 407–427 (CGALVLAGIMILINLLVPSDL). Residues 428–433 (QMLRTS) lie on the Extracellular side of the membrane. Residues 434–454 (LAVIGKGCLAASFNCCYLYAG) traverse the membrane as a helical segment. Topologically, residues 455 to 465 (ELYPTVIRQSG) are cytoplasmic. A helical membrane pass occupies residues 466–486 (MGWVSMMARFGAMVAPMVLLL). Over 487–491 (GDDYP) the chain is Extracellular. Residues 492 to 512 (WIPGFIYGGAPIVSGIFAFFL) traverse the membrane as a helical segment. Residues 513–560 (PETLSQPLPDTIQDIDDRGLARTNSKRLPEKLDLAMKDPSCVLLKESV) are Cytoplasmic-facing.

It belongs to the major facilitator (TC 2.A.1) superfamily. Organic cation transporter (TC 2.A.1.19) family. Glycosylated. Glycosylation is necessary for proper targeting of the transporter to the plasma membrane.

The protein resides in the cell membrane. It is found in the basolateral cell membrane. The protein localises to the basal cell membrane. In terms of biological role, involved in the renal elimination of endogenous and exogenous organic anions. Functions as organic anion exchanger when the uptake of one molecule of organic anion is coupled with an efflux of one molecule of endogenous dicarboxylic acid (glutarate, ketoglutarate, etc). Mediates the sodium-independent uptake of p-aminohippurate (PAH), 2,3-dimercapto-1-propanesulfonic acid (DMPS), cidofovir, adefovir, 9-(2-phosphonylmethoxyethyl) guanine (PMEG), 9-(2-phosphonylmethoxyethyl) diaminopurine (PMEDAP), ochratoxin (OTA), acyclovir (ACV), 3'-azido-3-'deoxythymidine (AZT), cimetidine (CMD), 2,4-dichloro-phenoxyacetate (2,4-D), hippurate (HA), indoleacetate (IA), indoxyl sulfate (IS) and 3-carboxy-4-methyl-5-propyl-2-furanpropionate (CMPF) and edaravone sulfate. PAH uptake is inhibited by p-chloromercuribenzenesulphonate (PCMBS), diethyl pyrocarbonate (DEPC), indomethacin, sulindac, diclofenac, carprofen, okadaic acid, benzothiazolylcysteine (BTC), S-chlorotrifluoroethylcysteine (CTFC), cysteine S-conjugates S-dichlorovinylcysteine (DCVC), furosemide, steviol, phorbol 12-myristate 13-acetate (PMA), calcium ionophore A23187, benzylpenicillin, bumetamide, losartan, probenecid, phenol red, urate, glutarate and alpha-ketoglutarate. The chain is Solute carrier family 22 member 6 (slc22a6) from Danio rerio (Zebrafish).